The sequence spans 176 residues: Small ribosomal subunit protein uS5 (176 aa).

The 64-residue stretch at 14-77 (MQEKLIHINR…DQARRWMTSI (64 aa)) folds into the S5 DRBM domain.

The protein belongs to the universal ribosomal protein uS5 family. Part of the 30S ribosomal subunit. Contacts proteins S4 and S8.

In terms of biological role, with S4 and S12 plays an important role in translational accuracy. Functionally, located at the back of the 30S subunit body where it stabilizes the conformation of the head with respect to the body. This Acidithiobacillus ferrooxidans (strain ATCC 23270 / DSM 14882 / CIP 104768 / NCIMB 8455) (Ferrobacillus ferrooxidans (strain ATCC 23270)) protein is Small ribosomal subunit protein uS5.